Here is a 458-residue protein sequence, read N- to C-terminus: UDP-N-acetylmuramate--L-alanine ligase (458 aa).

G115–T121 is a binding site for ATP.

The protein belongs to the MurCDEF family.

It localises to the cytoplasm. It carries out the reaction UDP-N-acetyl-alpha-D-muramate + L-alanine + ATP = UDP-N-acetyl-alpha-D-muramoyl-L-alanine + ADP + phosphate + H(+). The protein operates within cell wall biogenesis; peptidoglycan biosynthesis. Cell wall formation. This is UDP-N-acetylmuramate--L-alanine ligase from Anaeromyxobacter dehalogenans (strain 2CP-C).